Consider the following 122-residue polypeptide: Large ribosomal subunit protein bL12 (122 aa).

The protein belongs to the bacterial ribosomal protein bL12 family. As to quaternary structure, homodimer. Part of the ribosomal stalk of the 50S ribosomal subunit. Forms a multimeric L10(L12)X complex, where L10 forms an elongated spine to which 2 to 4 L12 dimers bind in a sequential fashion. Binds GTP-bound translation factors.

In terms of biological role, forms part of the ribosomal stalk which helps the ribosome interact with GTP-bound translation factors. Is thus essential for accurate translation. In Shewanella woodyi (strain ATCC 51908 / MS32), this protein is Large ribosomal subunit protein bL12.